The following is a 232-amino-acid chain: 7-cyano-7-deazaguanine synthase (232 aa).

8 to 18 (FSGGQDSTTCL) contributes to the ATP binding site. Zn(2+)-binding residues include C187, C196, C199, and C202.

This sequence belongs to the QueC family. The cofactor is Zn(2+).

It carries out the reaction 7-carboxy-7-deazaguanine + NH4(+) + ATP = 7-cyano-7-deazaguanine + ADP + phosphate + H2O + H(+). The protein operates within purine metabolism; 7-cyano-7-deazaguanine biosynthesis. Functionally, catalyzes the ATP-dependent conversion of 7-carboxy-7-deazaguanine (CDG) to 7-cyano-7-deazaguanine (preQ(0)). This is 7-cyano-7-deazaguanine synthase from Vibrio campbellii (strain ATCC BAA-1116).